We begin with the raw amino-acid sequence, 279 residues long: Diaminopimelate epimerase (279 aa).

Substrate is bound by residues Asn13 and Asn66. The active-site Proton donor is Cys75. Residues 76 to 77 (GN), Asn164, Asn197, and 215 to 216 (ER) each bind substrate. Cys224 (proton acceptor) is an active-site residue. A substrate-binding site is contributed by 225–226 (GT).

This sequence belongs to the diaminopimelate epimerase family. In terms of assembly, homodimer.

Its subcellular location is the cytoplasm. The enzyme catalyses (2S,6S)-2,6-diaminopimelate = meso-2,6-diaminopimelate. It functions in the pathway amino-acid biosynthesis; L-lysine biosynthesis via DAP pathway; DL-2,6-diaminopimelate from LL-2,6-diaminopimelate: step 1/1. Functionally, catalyzes the stereoinversion of LL-2,6-diaminopimelate (L,L-DAP) to meso-diaminopimelate (meso-DAP), a precursor of L-lysine and an essential component of the bacterial peptidoglycan. The sequence is that of Diaminopimelate epimerase from Brachyspira hyodysenteriae (strain ATCC 49526 / WA1).